The chain runs to 78 residues: Small, acid-soluble spore protein Tlp (78 aa).

A disordered region spans residues 32 to 78; that stretch reads SEEQLSFASEAEQEQIREKNERRNESIEAMRNEIHDEAEARKNGYHQ. The segment covering 45–78 has biased composition (basic and acidic residues); the sequence is EQIREKNERRNESIEAMRNEIHDEAEARKNGYHQ.

It belongs to the Tlp family.

The protein localises to the spore core. In Bacillus licheniformis (strain ATCC 14580 / DSM 13 / JCM 2505 / CCUG 7422 / NBRC 12200 / NCIMB 9375 / NCTC 10341 / NRRL NRS-1264 / Gibson 46), this protein is Small, acid-soluble spore protein Tlp.